A 620-amino-acid polypeptide reads, in one-letter code: MAAATPTETPAPEGSGLGMDARLDQETAQWLRWDQNPLTSESVKQLIAGGNKEELRKCFGARMEFGTAGLRAPMGAGISRMNDLTIIQTTQGFCRYLEKQFSDLKQRGVVISFDARAHPASGGSSRRFARLAATAFITQGVPVYLFSDITPTPFVPYTVSHLKLCAGIMITASHNPKQDNGYKVYWDNGAQIISPHDRGISQAIEENLEPWPQAWEESLVDSSPLLHNPSASIGNDYFEDLKKYCFHRTVNKESKVKFVHTSVHGVGHEFVQLAFKAFDLAPPEAVPQQKDPDPEFPTVKYPNPEEGKGVLTLSFALADKIKAKIVLANDPDADRLAVAEKQDSGEWRVFSGNELGALLGWWLFTSWKEKNQDQSNLKDTYMLSSTVSSKILRAIALKEGFHFEETLTGFKWMGNRAQQLGDQGKTVLFAFEEAIGYMCCPFVLDKDGVSAAVICAELASFLATKNLSLSQQLNAIYVEYGYHITTASYFICHDQGTIQNLFGNLRNYDGKNNYPKMCGKFEISAIRDLTTGYDDSQPDKKAVLPTSKSSQMITFTFANGGVATMRTSGTEPKIKYYAELCAPPGNSDPEHLKKELDELVGAIEEHFFQPQKYNLQPKAE.

Alpha-D-glucose 1,6-bisphosphate contacts are provided by Arg-71 and Ser-173. Ser-173 functions as the Phosphoserine intermediate in the catalytic mechanism. Mg(2+) is bound by residues Ser-173, Asp-330, Asp-332, and Asp-334. The residue at position 173 (Ser-173) is a Phosphoserine. Alpha-D-glucose 1,6-bisphosphate-binding residues include Asp-334, Arg-335, Thr-408, Glu-432, and Lys-446.

It belongs to the phosphohexose mutase family. As to quaternary structure, monomer. Requires Mg(2+) as cofactor. As to expression, highly expressed in lung, spleen and thymus. Expressed at lower levels in liver, brain, kidney, skeletal muscle, testis and heart.

It is found in the cytoplasm. The protein resides in the cytosol. The enzyme catalyses alpha-D-ribose 1-phosphate = D-ribose 5-phosphate. It catalyses the reaction 2-deoxy-alpha-D-ribose 1-phosphate = 2-deoxy-D-ribose 5-phosphate. The catalysed reaction is alpha-D-glucose 1-phosphate = alpha-D-glucose 6-phosphate. It carries out the reaction O-phospho-L-seryl-[protein] + alpha-D-glucose 1-phosphate = alpha-D-glucose 1,6-bisphosphate + L-seryl-[protein]. The enzyme catalyses alpha-D-glucose 1,6-bisphosphate + L-seryl-[protein] = O-phospho-L-seryl-[protein] + alpha-D-glucose 6-phosphate. Its function is as follows. Catalyzes the conversion of the nucleoside breakdown products ribose-1-phosphate and deoxyribose-1-phosphate to the corresponding 5-phosphopentoses. Catalyzes the reversible isomerization of alpha-D-glucose 1-phosphate to alpha-D-glucose 6-phosphate but with a lower catalytic efficiency. The mechanism proceeds via the intermediate compound alpha-D-glucose 1,6-bisphosphate. In vitro, also has a low glucose 1,6-bisphosphate synthase activity which is most probably not physiologically relevant. This is Phosphopentomutase from Mus musculus (Mouse).